Consider the following 2788-residue polypeptide: Multiple epidermal growth factor-like domains protein 8 (2788 aa).

The signal sequence occupies residues 1 to 27 (MALGGALAAALALAFAVLGPLSHKVLA). Over 28–2590 (GDCKGQRQVL…FFRQDQAHID (2563 aa)) the chain is Extracellular. 6 disulfide bridges follow: cysteine 30–cysteine 57, cysteine 142–cysteine 152, cysteine 146–cysteine 158, cysteine 174–cysteine 184, cysteine 178–cysteine 191, and cysteine 193–cysteine 202. The CUB 1 domain occupies 30–140 (CKGQRQVLRE…LGFNASFRFS (111 aa)). Asparagine 50 carries an N-linked (GlcNAc...) asparagine glycan. 2 EGF-like domains span residues 138–168 (RFSL…GGPD) and 170–203 (GLQE…RACD). 6 Kelch repeats span residues 241–287 (LLAV…AVAW), 290–338 (FLVL…AGHA), 346–399 (WLYV…FHAP), 402–453 (TLLV…FHTA), 459–511 (YMVV…APPS), and 525–575 (VLLV…SRDP). PSI domains follow at residues 561-613 (YCSM…SDCQ), 847-899 (ACSS…ALCP), and 900-947 (LCEE…EECP). Asparagine 1048 is a glycosylation site (N-linked (GlcNAc...) asparagine). Positions 1074 to 1115 (DVDECRLGLARCHPRATCLNTPLSYECHCQRGYQGDGITHCN) constitute an EGF-like 3; calcium-binding domain. Cystine bridges form between cysteine 1078–cysteine 1091, cysteine 1085–cysteine 1100, cysteine 1102–cysteine 1114, cysteine 1163–cysteine 1171, cysteine 1165–cysteine 1179, cysteine 1182–cysteine 1191, cysteine 1194–cysteine 1208, cysteine 1211–cysteine 1224, cysteine 1213–cysteine 1231, cysteine 1233–cysteine 1242, cysteine 1245–cysteine 1259, cysteine 1263–cysteine 1302, cysteine 1336–cysteine 1367, cysteine 1407–cysteine 1421, cysteine 1415–cysteine 1433, and cysteine 1435–cysteine 1444. Laminin EGF-like domains lie at 1163–1210 (CGCN…GCRP) and 1211–1261 (CQCN…SCFR). Residues 1263-1405 (CGGRALLTNV…WGFNASVGSA (143 aa)) enclose the CUB 2 domain. Residue asparagine 1271 is glycosylated (N-linked (GlcNAc...) asparagine). At threonine 1353 the chain carries Phosphothreonine. Residues 1403 to 1445 (GSARCGSGGPGSCPVPQECVPQDGAAGAGLCRCPQGWAGPHCR) enclose the EGF-like 4 domain. 6 Kelch repeats span residues 1522–1570 (TLWM…SFHA), 1580–1626 (AMYL…HTLT), 1632–1678 (SLLL…SAVY), 1684–1734 (SLYV…HASA), 1739–1786 (TMVV…ESVA), and 1795–1840 (RLYI…WCHG). 4 consecutive PSI domains span residues 1819–1859 (PCRL…PPCS), 1867–1922 (ECRR…NDCR), 2003–2061 (PCHL…ESCS), and 2063–2120 (GCAQ…LSCP). The N-linked (GlcNAc...) asparagine glycan is linked to asparagine 2009. An EGF-like 5 domain is found at 2121-2159 (PEDECANGHHDCNETQNCHDQPHGYECSCKTGYTMDNVT). Intrachain disulfides connect cysteine 2125–cysteine 2138 and cysteine 2132–cysteine 2147. Asparagine 2157 and asparagine 2172 each carry an N-linked (GlcNAc...) asparagine glycan. 4 disulfide bridges follow: cysteine 2196-cysteine 2204, cysteine 2198-cysteine 2213, cysteine 2216-cysteine 2225, and cysteine 2228-cysteine 2242. Laminin EGF-like domains lie at 2196–2244 (CRCN…TCRP) and 2323–2386 (CQCN…QCYR). The interval 2465–2507 (HTVHIQPPPPPPPPPPPADGVPRVASDLGGLGTGSGSGSPVEP) is disordered. Residues 2470 to 2483 (QPPPPPPPPPPPAD) are compositionally biased toward pro residues. A helical membrane pass occupies residues 2591–2611 (LFVFFSVFFSCFFLFLSLCVL). The Cytoplasmic segment spans residues 2612-2788 (LWKAKQALDQ…SQDNLTSMSL (177 aa)). Over residues 2761–2775 (GGAGGSGHGGGGGRK) the composition is skewed to gly residues. The tract at residues 2761–2788 (GGAGGSGHGGGGGRKGLLSQDNLTSMSL) is disordered. Over residues 2779–2788 (SQDNLTSMSL) the composition is skewed to polar residues.

Expressed in brain.

It localises to the membrane. Its function is as follows. Acts as a negative regulator of hedgehog signaling. The sequence is that of Multiple epidermal growth factor-like domains protein 8 (Megf8) from Rattus norvegicus (Rat).